A 1013-amino-acid polypeptide reads, in one-letter code: Probable outer membrane protein PmpG (1013 aa).

Residues 1 to 27 form the signal peptide; that stretch reads MQTSFHKFFLSMILAYSCCSLSGGGYA. One can recognise an Autotransporter domain in the interval 733–1013; that stretch reads GRSYCRGLWV…GLSAGSKVRF (281 aa).

It belongs to the PMP outer membrane protein family.

It is found in the secreted. Its subcellular location is the cell wall. It localises to the cell outer membrane. The polypeptide is Probable outer membrane protein PmpG (pmpG) (Chlamydia trachomatis serovar D (strain ATCC VR-885 / DSM 19411 / UW-3/Cx)).